Here is a 1203-residue protein sequence, read N- to C-terminus: DNA-directed RNA polymerase subunit beta (1203 aa).

Positions 1174–1195 (AAQEAKAAFEAEEAEKATKAEA) are enriched in basic and acidic residues. The disordered stretch occupies residues 1174-1203 (AAQEAKAAFEAEEAEKATKAEATEEAAEQE).

The protein belongs to the RNA polymerase beta chain family. As to quaternary structure, the RNAP catalytic core consists of 2 alpha, 1 beta, 1 beta' and 1 omega subunit. When a sigma factor is associated with the core the holoenzyme is formed, which can initiate transcription.

The enzyme catalyses RNA(n) + a ribonucleoside 5'-triphosphate = RNA(n+1) + diphosphate. In terms of biological role, DNA-dependent RNA polymerase catalyzes the transcription of DNA into RNA using the four ribonucleoside triphosphates as substrates. This chain is DNA-directed RNA polymerase subunit beta, found in Streptococcus pneumoniae (strain ATCC 700669 / Spain 23F-1).